The following is a 633-amino-acid chain: Chaperone protein DnaK (633 aa).

Thr198 is subject to Phosphothreonine; by autocatalysis.

It belongs to the heat shock protein 70 family.

Acts as a chaperone. This is Chaperone protein DnaK from Rhodopseudomonas palustris (strain HaA2).